A 527-amino-acid chain; its full sequence is Secologanin synthase 2 (527 aa).

Over 1 to 11 (MEMDMDIIRKA) the chain is Lumenal. The helical transmembrane segment at 12–32 (IAATIFALVMAWAWRVLDWAW) threads the bilayer. The Cytoplasmic segment spans residues 33-527 (FTPKRIEKRL…IYKKLERQNF (495 aa)). Residue cysteine 470 participates in heme binding.

This sequence belongs to the cytochrome P450 family. The cofactor is heme. Expressed in leaves (especially in leaf epidermis), and, to a lower extent, in roots, stems, flower buds and flowers.

Its subcellular location is the endoplasmic reticulum membrane. The enzyme catalyses loganin + reduced [NADPH--hemoprotein reductase] + O2 = secologanin + oxidized [NADPH--hemoprotein reductase] + 2 H2O + H(+). It carries out the reaction secologanin + reduced [NADPH--hemoprotein reductase] + O2 = secoxyloganin + oxidized [NADPH--hemoprotein reductase] + H2O + 2 H(+). It participates in alkaloid biosynthesis. Functionally, component of the seco-iridoid and derivatives monoterpenoid indole alkaloids (MIAs, e.g. secologanin) biosynthesis pathway. Catalyzes the conversion of loganin into secologanin. Catalyzes the conversion of secologanin into secoxyloganin. The polypeptide is Secologanin synthase 2 (Catharanthus roseus (Madagascar periwinkle)).